Here is a 233-residue protein sequence, read N- to C-terminus: Fibroblast growth factor 8 (233 aa).

The first 22 residues, 1–22 (MGSPRSALSCLLLHLLVLCLQA), serve as a signal peptide directing secretion. N155 carries an N-linked (GlcNAc...) asparagine glycan.

It belongs to the heparin-binding growth factors family. In terms of assembly, monomer. Homodimer. Interacts with FGFR1, FGFR2, FGFR3 and FGFR4. Affinity between fibroblast growth factors (FGFs) and their receptors is increased by heparan sulfate glycosaminoglycans that function as coreceptors.

Its subcellular location is the secreted. Functionally, plays an important role in the regulation of embryonic development, cell proliferation, cell differentiation and cell migration. Required for normal brain, eye, ear and limb development during embryogenesis. Required for normal development of the gonadotropin-releasing hormone (GnRH) neuronal system. Plays a role in neurite outgrowth in hippocampal cells. The protein is Fibroblast growth factor 8 (FGF8) of Homo sapiens (Human).